The primary structure comprises 140 residues: Nucleoside diphosphate kinase (140 aa).

ATP is bound by residues K9, F57, R85, T91, R102, and N112. The Pros-phosphohistidine intermediate role is filled by H115.

Belongs to the NDK family. As to quaternary structure, homotetramer. Mg(2+) is required as a cofactor.

It is found in the cytoplasm. It carries out the reaction a 2'-deoxyribonucleoside 5'-diphosphate + ATP = a 2'-deoxyribonucleoside 5'-triphosphate + ADP. The catalysed reaction is a ribonucleoside 5'-diphosphate + ATP = a ribonucleoside 5'-triphosphate + ADP. Major role in the synthesis of nucleoside triphosphates other than ATP. The ATP gamma phosphate is transferred to the NDP beta phosphate via a ping-pong mechanism, using a phosphorylated active-site intermediate. The polypeptide is Nucleoside diphosphate kinase (Chlorobaculum tepidum (strain ATCC 49652 / DSM 12025 / NBRC 103806 / TLS) (Chlorobium tepidum)).